Consider the following 151-residue polypeptide: Kinetoplast-associated protein 1 (151 aa).

The propeptide occupies 1 to 9; sequence MLRVSVRSL. A disordered region spans residues 13–151; it reads ASSKAGSKAA…KKGAAKKAHK (139 aa). Composition is skewed to low complexity over residues 15–49, 70–91, and 101–111; these read SKAGSKAAVPAAAAAASAPLSPATSAASARAVPPV, AAAAPAKKAAAPKAAKAKTPAK, and SKPSAPKQAAG. A compositionally biased stretch (basic residues) spans 112–151; sequence KMRKAAGKAQRKIKAAARKAAPKKMAKSFGKKGAAKKAHK.

This sequence belongs to the KAP family. In terms of assembly, associates with the kinetoplast DNA network.

The protein resides in the mitochondrion matrix. It is found in the kinetoplast. In terms of biological role, histone H1-like DNA-binding protein involved in the organization and segregation of kinetoplast DNA (kDNA). The mitochondrial DNA of kinetoplastid protozoa consists of about 5,000 minicircles and 20 to 30 maxicircles. These circular DNAs are held together by catenation into a highly organized compact disk structure referred to as a kinetoplast DNA (kDNA) network. Binds preferentially to a specific fragment of minicircle DNA and is able to compact kDNA networks through DNA charge neutralization and condensation. This is Kinetoplast-associated protein 1 (KAP4) from Crithidia fasciculata.